The chain runs to 500 residues: Glycerol kinase (500 aa).

T13 is an ADP binding site. 3 residues coordinate ATP: T13, T14, and S15. T13 is a binding site for sn-glycerol 3-phosphate. R17 provides a ligand contact to ADP. 4 residues coordinate sn-glycerol 3-phosphate: R83, E84, Y136, and D246. Residues R83, E84, Y136, D246, and Q247 each contribute to the glycerol site. ADP is bound by residues T268 and G311. T268, G311, Q315, and G412 together coordinate ATP. ADP is bound by residues G412 and N416.

It belongs to the FGGY kinase family.

It carries out the reaction glycerol + ATP = sn-glycerol 3-phosphate + ADP + H(+). It participates in polyol metabolism; glycerol degradation via glycerol kinase pathway; sn-glycerol 3-phosphate from glycerol: step 1/1. With respect to regulation, inhibited by fructose 1,6-bisphosphate (FBP). Key enzyme in the regulation of glycerol uptake and metabolism. Catalyzes the phosphorylation of glycerol to yield sn-glycerol 3-phosphate. This Francisella tularensis subsp. novicida (strain U112) protein is Glycerol kinase.